The sequence spans 261 residues: Glucose 1-dehydrogenase (261 aa).

Position 11–35 (11–35 (AITGAASGLGKAMAIRFGKEQAKVV)) interacts with NADP(+). Residue Ser145 coordinates substrate. Tyr158 acts as the Proton acceptor in catalysis.

Belongs to the short-chain dehydrogenases/reductases (SDR) family. Homotetramer.

It catalyses the reaction D-glucose + NAD(+) = D-glucono-1,5-lactone + NADH + H(+). The enzyme catalyses D-glucose + NADP(+) = D-glucono-1,5-lactone + NADPH + H(+). The protein is Glucose 1-dehydrogenase (gdh) of Bacillus subtilis (strain 168).